A 93-amino-acid polypeptide reads, in one-letter code: Small ribosomal subunit protein uS19 (93 aa).

This sequence belongs to the universal ribosomal protein uS19 family.

Functionally, protein S19 forms a complex with S13 that binds strongly to the 16S ribosomal RNA. The polypeptide is Small ribosomal subunit protein uS19 (Nautilia profundicola (strain ATCC BAA-1463 / DSM 18972 / AmH)).